Consider the following 108-residue polypeptide: Class I hydrophobin 3 (108 aa).

The N-terminal stretch at 1–17 (MFFQTTIVAALASLAVA) is a signal peptide. 4 disulfide bridges follow: Cys-28/Cys-87, Cys-35/Cys-81, Cys-36/Cys-69, and Cys-88/Cys-101. Residue Asn-37 is glycosylated (N-linked (GlcNAc...) asparagine).

It belongs to the fungal hydrophobin family. In terms of assembly, self-assembles to form functional amyloid fibrils called rodlets. Self-assembly into fibrillar rodlets occurs spontaneously at hydrophobic:hydrophilic interfaces and the rodlets further associate laterally to form amphipathic monolayers.

It is found in the secreted. Its subcellular location is the cell wall. Aerial growth, conidiation, and dispersal of filamentous fungi in the environment rely upon a capability of their secreting small amphipathic proteins called hydrophobins (HPBs) with low sequence identity. Class I can self-assemble into an outermost layer of rodlet bundles on aerial cell surfaces, conferring cellular hydrophobicity that supports fungal growth, development and dispersal; whereas Class II form highly ordered films at water-air interfaces through intermolecular interactions but contribute nothing to the rodlet structure. Vmh3 is a class I hydrophobin that is essential for the maintenance of the surface hydrophobicity of the mycelium and might be involved in the development of fruiting bodies. Plays an important role in hyphal resistance against environmental stress. Necessary for the efficient biodegradation of lignin. This Pleurotus ostreatus (strain PC15) (Oyster mushroom) protein is Class I hydrophobin 3.